The chain runs to 408 residues: Serine/threonine transporter SstT (408 aa).

9 consecutive transmembrane segments (helical) span residues 11–31, 43–63, 82–102, 141–161, 192–212, 216–236, 290–310, 316–336, and 363–383; these read LANG…VSLA, FLGS…VFIL, IVVL…VLSM, ALMT…GLAL, IGIF…AIAG, LLAV…PLIV, IPLG…VLTL, LGIQ…AISA, and VAMQ…AAET.

It belongs to the dicarboxylate/amino acid:cation symporter (DAACS) (TC 2.A.23) family.

The protein localises to the cell inner membrane. It catalyses the reaction L-serine(in) + Na(+)(in) = L-serine(out) + Na(+)(out). The catalysed reaction is L-threonine(in) + Na(+)(in) = L-threonine(out) + Na(+)(out). Functionally, involved in the import of serine and threonine into the cell, with the concomitant import of sodium (symport system). The polypeptide is Serine/threonine transporter SstT (Shewanella sp. (strain ANA-3)).